Here is a 118-residue protein sequence, read N- to C-terminus: Acidic phospholipase A2 PA-3 (118 aa).

7 disulfide bridges follow: C11-C71, C27-C117, C29-C45, C44-C98, C51-C91, C60-C84, and C78-C89. Positions 28, 30, and 32 each coordinate Ca(2+). The active site involves H48. A Ca(2+)-binding site is contributed by D49. The active site involves D92.

Belongs to the phospholipase A2 family. Group I subfamily. D49 sub-subfamily. Ca(2+) serves as cofactor. In terms of tissue distribution, expressed by the venom gland.

The protein resides in the secreted. The catalysed reaction is a 1,2-diacyl-sn-glycero-3-phosphocholine + H2O = a 1-acyl-sn-glycero-3-phosphocholine + a fatty acid + H(+). PLA2 catalyzes the calcium-dependent hydrolysis of the 2-acyl groups in 3-sn-phosphoglycerides. This chain is Acidic phospholipase A2 PA-3, found in Pseudechis australis (Mulga snake).